The primary structure comprises 297 residues: Formiminotransferase cyclodeaminase-like protein (297 aa).

The interval 2 to 196 (LREMLGCCKV…GVVAVGACGW (195 aa)) is formiminotransferase N-subdomain. Residue His89 is the For formimidoyltransferase activity of the active site. 178 to 187 (GPQEVSKAKG) serves as a coordination point for folate.

It belongs to the formiminotransferase family. In terms of tissue distribution, expressed constitutively in roots, stems, leaves and flowers.

The protein resides in the golgi apparatus. It is found in the trans-Golgi network. The catalysed reaction is (6S)-5-formyl-5,6,7,8-tetrahydrofolate + L-glutamate = N-formyl-L-glutamate + (6S)-5,6,7,8-tetrahydrofolate + H(+). It carries out the reaction 5-formimidoyltetrahydrofolate + L-glutamate = N-formimidoyl-L-glutamate + (6S)-5,6,7,8-tetrahydrofolate. It participates in one-carbon metabolism; tetrahydrofolate interconversion. Functionally, involved in the regulation of root growth. May regulate sorting and/or transportation of trans-Golgi network (TGN) vesicles in root cap peripheral cells, thus influencing the extracellular secretion of mucilage components in the root cap. The polypeptide is Formiminotransferase cyclodeaminase-like protein (Arabidopsis thaliana (Mouse-ear cress)).